We begin with the raw amino-acid sequence, 382 residues long: MNTPPFVCWIFCKVIDNFGDIGVSLRLARVLHRELGWQVHLWTDDVSALRALCPDLPDVPCVHQDIHVRTWHSDAADIDTAPVPDAVIETFACDLPENVLHIIRRHKPLWLNWEYLSAEESNERLHLMPSPQEGVQKYFWFMGFSEKSGGLIRERDYRDAVRFDTEALRQRLMLPEKNAPEWLLFGYRSDVWAKWLEMWQQAGSPMTLLLAGAQIIDSLKQSGIIPQNALQNDGDVFQTASVRLVKIPFVPQQDFDQLLHLADCAVIRGEDSFVRAQLAGKPFFWHIYPQDEHVHLDKLHAFWDKAHGFYTPETASAHRCLSDDLNGGEALSATQRLECWQILQQHQNGWRQGAGAWSRYLFGQPSASEKLAAFVSKHQKIR.

DTDP-beta-L-rhamnose-binding positions include Asn-17 to Asp-20, Tyr-187, Gln-252, and Arg-268 to Ser-272. The active-site Proton acceptor is Asp-20. Glu-270 is a catalytic residue.

It belongs to the glycosyltransferase 104 family.

It catalyses the reaction dTDP-beta-L-rhamnose + L-arginyl-[protein] = N(omega)-(alpha-L-rhamnosyl)-L-arginyl-[protein] + dTDP + H(+). Functionally, protein-arginine rhamnosyltransferase that catalyzes the transfer of a single rhamnose to elongation factor P (EF-P) on 'Lys-32', a modification required for EF-P-dependent rescue of polyproline stalled ribosomes. The protein is Protein-arginine rhamnosyltransferase of Neisseria meningitidis.